Here is a 639-residue protein sequence, read N- to C-terminus: Chaperone protein DnaK (639 aa).

Thr198 bears the Phosphothreonine; by autocatalysis mark. Residues 603 to 618 (AKAQTQGGAQEGAAKQ) show a composition bias toward low complexity. Residues 603-639 (AKAQTQGGAQEGAAKQSNATADDVVDAEFEEVKDDKK) form a disordered region. Residues 625–639 (DVVDAEFEEVKDDKK) show a composition bias toward acidic residues.

It belongs to the heat shock protein 70 family.

Its function is as follows. Acts as a chaperone. The chain is Chaperone protein DnaK from Shewanella sp. (strain MR-4).